The primary structure comprises 635 residues: Probable ethylene response sensor 2 (635 aa).

The next 3 membrane-spanning stretches (helical) occupy residues 24 to 44, 59 to 79, and 94 to 114; these read ISDF…IYFV, FGAF…TFAI, and ATAV…PDLL. Positions 66 and 70 each coordinate Cu cation. Positions 159–308 constitute a GAF domain; it reads DRHTILRTTL…VVADQVAVAL (150 aa). Residues 351–589 enclose the Histidine kinase domain; that stretch reads VMNHEMRTPM…MFFVKLGMPE (239 aa). His354 carries the phosphohistidine; by autocatalysis modification.

The protein belongs to the ethylene receptor family. In terms of assembly, homodimer. The cofactor is Cu cation. In terms of tissue distribution, expressed in anthers and hulls.

Its subcellular location is the endoplasmic reticulum membrane. It carries out the reaction ATP + protein L-histidine = ADP + protein N-phospho-L-histidine.. Functionally, ethylene receptor related to bacterial two-component regulators. Acts as a negative regulator of ethylene signaling. May play a role in the regulation of flowering by up-regulating GI (GIGANTEA) and RCN1 and regulate starch accumulation by down-regulating the alpha-amylase AMY3D. In Oryza sativa subsp. indica (Rice), this protein is Probable ethylene response sensor 2.